Reading from the N-terminus, the 362-residue chain is Transcriptional repressor PifC (362 aa).

Functionally, transcription repression of its own gene by binding to the PIF operator (pifO) and replication initiation from the primary origin (ori-1). Transcriptional repressor of the pifA and pifB. In Escherichia coli (strain K12), this protein is Transcriptional repressor PifC (pifC).